Consider the following 506-residue polypeptide: 2,3-bisphosphoglycerate-independent phosphoglycerate mutase (506 aa).

Positions 13 and 63 each coordinate Mn(2+). S63 functions as the Phosphoserine intermediate in the catalytic mechanism. Substrate is bound by residues H124, 153-154 (RD), R183, R189, 254-257 (RADR), and K330. Mn(2+) contacts are provided by D396, H400, D437, H438, and H456.

The protein belongs to the BPG-independent phosphoglycerate mutase family. In terms of assembly, monomer. Mn(2+) is required as a cofactor.

It carries out the reaction (2R)-2-phosphoglycerate = (2R)-3-phosphoglycerate. The protein operates within carbohydrate degradation; glycolysis; pyruvate from D-glyceraldehyde 3-phosphate: step 3/5. In terms of biological role, catalyzes the interconversion of 2-phosphoglycerate and 3-phosphoglycerate. The chain is 2,3-bisphosphoglycerate-independent phosphoglycerate mutase from Cereibacter sphaeroides (strain KD131 / KCTC 12085) (Rhodobacter sphaeroides).